The primary structure comprises 85 residues: Small ribosomal subunit protein uS17 (85 aa).

It belongs to the universal ribosomal protein uS17 family. Part of the 30S ribosomal subunit.

Its function is as follows. One of the primary rRNA binding proteins, it binds specifically to the 5'-end of 16S ribosomal RNA. In Lachnospira eligens (strain ATCC 27750 / DSM 3376 / VPI C15-48 / C15-B4) (Eubacterium eligens), this protein is Small ribosomal subunit protein uS17.